Reading from the N-terminus, the 395-residue chain is Protein BUR2 (395 aa).

Disordered regions lie at residues 1 to 31 (MSAT…ASSG) and 372 to 395 (AKQE…KPKI). Ser24 carries the phosphoserine modification.

In terms of assembly, belongs to the BUR kinase complex composed of SGV1/BUR1 and BUR2. Interacts with SGV1.

Its subcellular location is the nucleus. Its function is as follows. Component of the BUR kinase complex involved in transcription regulation. This complex phosphorylates 'Ser-120' of the UBC2/RAD6 ubiquitin-conjugating enzyme (E2), leading to monoubiquitination of histone H2B, the localization of the PAF1 complex to the chromatin, and the silencing of telomeric-associated genes. Also required for histone H3 'Lys-4' trimethylation. May phosphorylate the 'Ser-5' of the RBP1 carboxy-terminal domain (CTD) repeats. Necessary for the recovery from pheromone-induced growth arrest in the cell cycle G1 phase. Also required for vegetative growth itself. The kinase activity of the complex requires the presence of BUR2. Overexpression of BUR2 interferes with mitotic chromosome segregation. In Saccharomyces cerevisiae (strain ATCC 204508 / S288c) (Baker's yeast), this protein is Protein BUR2 (BUR2).